Reading from the N-terminus, the 322-residue chain is Cytochrome f (322 aa).

The signal sequence occupies residues methionine 1 to serine 35. Heme contacts are provided by tyrosine 38, cysteine 58, cysteine 61, and histidine 62. Residues valine 288–lysine 308 traverse the membrane as a helical segment.

This sequence belongs to the cytochrome f family. The 4 large subunits of the cytochrome b6-f complex are cytochrome b6, subunit IV (17 kDa polypeptide, petD), cytochrome f and the Rieske protein, while the 4 small subunits are PetG, PetL, PetM and PetN. The complex functions as a dimer. Requires heme as cofactor.

The protein localises to the plastid. Its subcellular location is the chloroplast thylakoid membrane. Its function is as follows. Component of the cytochrome b6-f complex, which mediates electron transfer between photosystem II (PSII) and photosystem I (PSI), cyclic electron flow around PSI, and state transitions. This Aethionema grandiflorum (Persian stone-cress) protein is Cytochrome f.